The following is a 34-amino-acid chain: MTYMKLTAAKRIVFFIYLFVIQFWKNASFQTKVS.

A helical membrane pass occupies residues 7–24 (TAAKRIVFFIYLFVIQFW).

It localises to the membrane. The chain is Putative protein YmiB (ymiB) from Escherichia coli (strain K12).